The chain runs to 195 residues: Probable WRKY transcription factor 56 (195 aa).

A compositionally biased stretch (polar residues) spans 1-10 (MEGVDNTNPM). 2 disordered regions span residues 1–20 (MEGVDNTNPMLTLEEGENNN) and 70–93 (EMGGLVSNNSNNSDHNKNCNKGKG). A DNA-binding region (WRKY) is located at residues 108 to 173 (SDDDVLDDGY…YEGVHNHPCE (66 aa)).

Belongs to the WRKY group II-c family.

It localises to the nucleus. Transcription factor. Interacts specifically with the W box (5'-(T)TGAC[CT]-3'), a frequently occurring elicitor-responsive cis-acting element. This chain is Probable WRKY transcription factor 56 (WRKY56), found in Arabidopsis thaliana (Mouse-ear cress).